Reading from the N-terminus, the 621-residue chain is tRNA uridine 5-carboxymethylaminomethyl modification enzyme MnmG (621 aa).

11–16 (GGGHAG) lines the FAD pocket. 270 to 284 (GPRYCPSIEDKINRF) contributes to the NAD(+) binding site.

Belongs to the MnmG family. In terms of assembly, homodimer. Heterotetramer of two MnmE and two MnmG subunits. FAD serves as cofactor.

It localises to the cytoplasm. In terms of biological role, NAD-binding protein involved in the addition of a carboxymethylaminomethyl (cmnm) group at the wobble position (U34) of certain tRNAs, forming tRNA-cmnm(5)s(2)U34. The sequence is that of tRNA uridine 5-carboxymethylaminomethyl modification enzyme MnmG from Helicobacter pylori (strain Shi470).